A 130-amino-acid chain; its full sequence is UPF0713 protein YngL (130 aa).

Transmembrane regions (helical) follow at residues leucine 4 to phenylalanine 25, methionine 62 to leucine 84, and isoleucine 89 to glycine 111.

It belongs to the UPF0713 family.

It is found in the cell membrane. This Bacillus subtilis (strain 168) protein is UPF0713 protein YngL (yngL).